Reading from the N-terminus, the 441-residue chain is Malate dehydrogenase [NADP], chloroplastic (441 aa).

Residues 1 to 58 (MALTQLNSTCSKPQLHSSSQLSFLSRTRTRTLPRHYHSTFAPLHRTQHARISCSVAPN) constitute a chloroplast transit peptide. C76 and C81 are oxidised to a cystine. NADP(+) is bound at residue 105–111 (GAAGMIS). The substrate site is built by R186 and R192. An NADP(+)-binding site is contributed by N199. Q206 is a binding site for NAD(+). Residue 223-225 (VGN) participates in NADP(+) binding. 2 residues coordinate substrate: N225 and R256. H281 acts as the Proton acceptor in catalysis. C417 and C429 are oxidised to a cystine.

Belongs to the LDH/MDH superfamily. MDH type 2 family. In terms of assembly, homodimer.

The protein localises to the plastid. It localises to the chloroplast. It catalyses the reaction (S)-malate + NADP(+) = oxaloacetate + NADPH + H(+). With respect to regulation, chloroplast NADP-MDH is activated upon illumination. In order to be enzymatically active, disulfide bridges on the protein must be reduced by thioredoxin which receives electrons from ferredoxin and the electron transport system of photosynthesis. In terms of biological role, the chloroplastic, NADP-dependent form is essential for the photosynthesis C4 cycle, which allows plants to circumvent the problem of photorespiration. In C4 plants, NADP-MDH activity acts to convert oxaloacetate to malate in chloroplasts of mesophyll cells for transport to the bundle sheath cells. The protein is Malate dehydrogenase [NADP], chloroplastic of Pisum sativum (Garden pea).